A 336-amino-acid polypeptide reads, in one-letter code: MSTEHVSNVYSVESLLSNVEKSSVSPTESIEDRNEFMITEDVMSSWQRMAATISLQQKLLMMQQTMPRPPPVNILGNFPFGFLNAPMFWQQYLRSMAMGIIPQNPESPSASVWNRTPTPPVEIKPFHCQKCTKLFSTIAALEQHQQVHVSDKQFECKQCGKTFKRSSTLSTHLLIHSDTRPYPCEYCGKRFHQKSDMKKHTYIHTGEKPHKCTVCGKAFSQSSNLITHTRKHTGFKPFACDVCGRTFQRKVDRRRHRESHHPGHPEECVSASQISSDLSPKGYMTPPTSNGYLDSSDEFLNVFRLPAELLAIKAEMGEEMEEADDEEEKVLNLSVS.

C2H2-type zinc fingers lie at residues 126-148 (FHCQ…QQVH), 154-176 (FECK…LLIH), 182-204 (YPCE…TYIH), 210-232 (HKCT…TRKH), and 238-260 (FACD…RESH). Positions 253–290 (RRRHRESHHPGHPEECVSASQISSDLSPKGYMTPPTSN) are disordered.

As to quaternary structure, may interact with transcription factor unc-3. As to expression, expressed in the BDU neurons, the touch neurons, the VA, VB and VC motor neurons, two AVF interneurons and unidentified neurons of the retrovesicular ganglion (at protein level).

The protein localises to the nucleus. It is found in the cell projection. Its subcellular location is the axon. It localises to the perikaryon. Its function is as follows. Transcription factor. Plays a role in the determination of neuroblast cell fate and neuronal differentiation. Negatively modulates expression of several components of dense-core vesicles (DCVs), thereby, in a DCV membrane protein ida-1-dependent manner, regulating neurosecretion. Negatively modulates the transcription of its own gene, the mechanosensory gene mec-3, and also other touch neuron-specific genes in the BDU neurons; required for coordinated movement. Required to determine the identity of BDU sensory neurons in concert with transcription factor unc-86, regulating expression of a number of genes, including transcription factors ceh-14 and ahr-1, neuropeptides flp-10, nlp-1 and nlp-15, and tyramine receptor-encoding ser-2. Acts in concert with non-canonical WNT signaling to negatively modulate transcription of mec-3 gene in BDU neurons. May act in concert with transcription factor unc-3 in motor neuron fate determination. May play a role programmed cell death. This is Zinc finger protein GFI1 homolog pag-3 from Caenorhabditis elegans.